A 463-amino-acid polypeptide reads, in one-letter code: Lactadherin (463 aa).

The first 22 residues, M1 to A22, serve as a signal peptide directing secretion. EGF-like domains lie at S24–N61 and E64–E108. 3 cysteine pairs are disulfide-bonded: C28/C39, C33/C49, and C51/C60. An N-linked (GlcNAc...) asparagine glycan is attached at N61. Intrachain disulfides connect C68-C79, C73-C96, C98-C107, C148-C303, C290-C294, and C308-C463. The Cell attachment site motif lies at R87–D89. 2 F5/8 type C domains span residues C148–C303 and C308–C463. N266 is a glycosylation site (N-linked (GlcNAc...) asparagine). N-linked (GlcNAc...) asparagine glycosylation is found at N316 and N426.

Post-translationally, N-glycosylated. Isoform 1 also exists in both an O-glycosylated and a non-O-glycosylated form. As to expression, mammary epithelial cell surfaces and spermatozoan. Isoform 2 is present in brain, heart, kidney and spleen and at low levels in lung, liver, small intestine and testis.

It is found in the membrane. The protein localises to the secreted. The protein resides in the cytoplasmic vesicle. It localises to the secretory vesicle. Its subcellular location is the acrosome membrane. Its function is as follows. Contributes to phagocytic removal of apoptotic cells in many tissues. Specific ligand for the alpha-v/beta-3 and alpha-v/beta-5 receptors. Also binds to phosphatidylserine-enriched cell surfaces in a receptor-independent manner. Zona pellucida-binding protein which may play a role in gamete interaction. Plays an important role in the maintenance of intestinal epithelial homeostasis and the promotion of mucosal healing. Promotes VEGF-dependent neovascularization. This is Lactadherin (Mfge8) from Mus musculus (Mouse).